The sequence spans 222 residues: MARFHIILGLVVCFFAWIFFLIFPNLDIQFAGHFYNSSAHQFIGGYDGFLGFLHWFARFFPIFFSIIVILFLLGSLFIDKFKIKYRKAIFFIAVCLWIGPGLVVNYVFKDHWGRPRPVMVEQFNGDKIFQPPFVISSQCDKNCSFVCGDASMGFWLFAFMPLLATRKKKLVAFIAAVVAGGGLGLMRMSQGGHFFSDVVFCGIFVYISTWVVYALMYRKKEY.

Topologically, residues 1–3 are cytoplasmic; sequence MAR. Residues 4 to 24 form a helical membrane-spanning segment; that stretch reads FHIILGLVVCFFAWIFFLIFP. Residues 25-58 lie on the Periplasmic side of the membrane; sequence NLDIQFAGHFYNSSAHQFIGGYDGFLGFLHWFAR. The helical transmembrane segment at 59–79 threads the bilayer; the sequence is FFPIFFSIIVILFLLGSLFID. Residues 80 to 87 are Cytoplasmic-facing; it reads KFKIKYRK. A helical membrane pass occupies residues 88–108; that stretch reads AIFFIAVCLWIGPGLVVNYVF. Residues 109-144 are Periplasmic-facing; the sequence is KDHWGRPRPVMVEQFNGDKIFQPPFVISSQCDKNCS. Residues 145–165 form a helical membrane-spanning segment; that stretch reads FVCGDASMGFWLFAFMPLLAT. At 166–169 the chain is on the cytoplasmic side; it reads RKKK. Residues 170–190 traverse the membrane as a helical segment; it reads LVAFIAAVVAGGGLGLMRMSQ. Residues 191–193 lie on the Periplasmic side of the membrane; it reads GGH. The chain crosses the membrane as a helical span at residues 194-214; sequence FFSDVVFCGIFVYISTWVVYA. The Cytoplasmic segment spans residues 215 to 222; it reads LMYRKKEY.

The protein belongs to the lipid A LpxF 4'-phosphatase family.

It localises to the cell inner membrane. It participates in bacterial outer membrane biogenesis; LPS lipid A biosynthesis. Functionally, removes the 4'-phosphate moiety from lipid IV(A) (a tetraacylated precursor of lipid A) and from pentaacylated lipid A, but not from hexaacylated lipid A (as is found in E.coli). Does not dephosphorylate phosphatidic acid, phosphatidylglycerophosphate, or the 1-phosphate group of lipid A and lipid A precursors. Its expression in E.coli confers resistance to the cationic antimicrobial peptide (CAMP) polymyxin B. Plays a critical role in the ability of the bacteria to avoid the host's innate immune system, especially the bactericidal action of CAMPs, although whether it is CAMP-sensitivity or increased sensitivity to the immune system is not clear. This chain is Lipid A 4'-phosphatase, found in Francisella tularensis subsp. novicida (strain U112).